A 40-amino-acid polypeptide reads, in one-letter code: Ferredoxin-2 (40 aa).

In terms of domain architecture, 2Fe-2S ferredoxin-type spans 3–40 (YNIKLITPEGTKEITCSDSEYILDAAEEKGLDLPYSCR). Cys-39 is a binding site for [2Fe-2S] cluster.

It belongs to the 2Fe2S plant-type ferredoxin family. [2Fe-2S] cluster serves as cofactor.

It localises to the plastid. Its subcellular location is the chloroplast. Ferredoxins are iron-sulfur proteins that transfer electrons in a wide variety of metabolic reactions. The sequence is that of Ferredoxin-2 from Pisum sativum (Garden pea).